A 102-amino-acid polypeptide reads, in one-letter code: MTLRVVPEGLAAASAAVEALTARLAAAHASAAPVITAVVPPAADPVSLQTAAGFSAQGVEHAVVTAEGVEELGRAGVGVGESGASYLAGDAAAAATYGVVGG.

The 90-residue stretch at 3–92 (LRVVPEGLAA…GASYLAGDAA (90 aa)) folds into the PE domain.

This sequence belongs to the mycobacterial PE family.

It is found in the secreted. The protein resides in the cell envelope. Its subcellular location is the cell surface. Its function is as follows. Important for the siderophore-mediated iron-acquisition function of ESX-3. May play a pivotal role in the evasion of host immune response by M.tuberculosis. Mediates production of IL-10 via activation of the p38 and ERK1/2 mitogen-activated protein kinase (MAPK) signaling pathways. The sequence is that of PE family immunomodulator PE5 from Mycobacterium tuberculosis (strain ATCC 25618 / H37Rv).